The primary structure comprises 205 residues: Putative 3-methyladenine DNA glycosylase (205 aa).

This sequence belongs to the DNA glycosylase MPG family.

The protein is Putative 3-methyladenine DNA glycosylase of Bacillus cereus (strain ATCC 10987 / NRS 248).